We begin with the raw amino-acid sequence, 87 residues long: Acyl carrier protein 3 (87 aa).

A Carrier domain is found at 1 to 79 (MSNPTVLDQI…DLVTYIEAAL (79 aa)). Residue serine 39 is modified to O-(pantetheine 4'-phosphoryl)serine.

It belongs to the acyl carrier protein (ACP) family. In terms of processing, 4'-phosphopantetheine is transferred from CoA to a specific serine of apo-ACP by AcpS. This modification is essential for activity because fatty acids are bound in thioester linkage to the sulfhydryl of the prosthetic group.

Its subcellular location is the cytoplasm. It functions in the pathway lipid metabolism; fatty acid biosynthesis. Carrier of the growing fatty acid chain in fatty acid biosynthesis. In Ralstonia nicotianae (strain ATCC BAA-1114 / GMI1000) (Ralstonia solanacearum), this protein is Acyl carrier protein 3.